Reading from the N-terminus, the 277-residue chain is L-aspartate oxidase (277 aa).

R23 (proton donor/acceptor) is an active-site residue. Residues E106 and 122 to 123 each bind FAD; that span reads SL. Disordered regions lie at residues 142–161 and 234–277; these read LRRG…PPPA and DYPA…ETRS. The segment covering 146–161 has biased composition (pro residues); sequence WPPPAPPDLSPRPPPA.

This sequence belongs to the FAD-dependent oxidoreductase 2 family. NadB subfamily. The cofactor is FAD.

The protein localises to the cytoplasm. It carries out the reaction L-aspartate + O2 = iminosuccinate + H2O2. It functions in the pathway cofactor biosynthesis; NAD(+) biosynthesis; iminoaspartate from L-aspartate (oxidase route): step 1/1. Catalyzes the oxidation of L-aspartate to iminoaspartate, the first step in the de novo biosynthesis of NAD(+). This is L-aspartate oxidase (nadB) from Rhodospirillum rubrum.